The sequence spans 394 residues: WAT1-related protein At2g40900 (394 aa).

10 helical membrane-spanning segments follow: residues 13 to 33, 40 to 60, 67 to 87, 102 to 122, 142 to 162, 180 to 200, 209 to 229, 245 to 265, 273 to 293, and 298 to 318; these read FAMV…KTVL, YVLV…FALL, SKMT…GPVI, TFSS…ATLF, LVTV…INFF, AAVF…LQAA, LSMS…LAFV, LLAS…VQGL, VFVT…SFFV, and IYLG…AVLW. 2 EamA domains span residues 22-147 and 189-317; these read YAGM…TVVG and LSWA…YAVL.

The protein belongs to the drug/metabolite transporter (DMT) superfamily. Plant drug/metabolite exporter (P-DME) (TC 2.A.7.4) family.

It is found in the membrane. This chain is WAT1-related protein At2g40900, found in Arabidopsis thaliana (Mouse-ear cress).